The chain runs to 213 residues: Urease accessory protein UreG (213 aa).

Position 14 to 21 (14 to 21) interacts with GTP; that stretch reads GPVGSGKT.

This sequence belongs to the SIMIBI class G3E GTPase family. UreG subfamily. In terms of assembly, homodimer. UreD, UreF and UreG form a complex that acts as a GTP-hydrolysis-dependent molecular chaperone, activating the urease apoprotein by helping to assemble the nickel containing metallocenter of UreC. The UreE protein probably delivers the nickel.

The protein localises to the cytoplasm. Facilitates the functional incorporation of the urease nickel metallocenter. This process requires GTP hydrolysis, probably effectuated by UreG. In Mesorhizobium japonicum (strain LMG 29417 / CECT 9101 / MAFF 303099) (Mesorhizobium loti (strain MAFF 303099)), this protein is Urease accessory protein UreG.